Consider the following 202-residue polypeptide: Imidazoleglycerol-phosphate dehydratase (202 aa).

This sequence belongs to the imidazoleglycerol-phosphate dehydratase family.

It is found in the cytoplasm. The enzyme catalyses D-erythro-1-(imidazol-4-yl)glycerol 3-phosphate = 3-(imidazol-4-yl)-2-oxopropyl phosphate + H2O. Its pathway is amino-acid biosynthesis; L-histidine biosynthesis; L-histidine from 5-phospho-alpha-D-ribose 1-diphosphate: step 6/9. The sequence is that of Imidazoleglycerol-phosphate dehydratase from Acinetobacter baumannii (strain AYE).